Here is a 365-residue protein sequence, read N- to C-terminus: Patr class I histocompatibility antigen, A-108 alpha chain (365 aa).

Positions 1 to 24 are cleaved as a signal peptide; that stretch reads MAVMPPRTLLLLLSGALALTQTWA. Residues 25 to 114 are alpha-1; the sequence is GSHSMRYFYT…LRGYYNQSED (90 aa). Topologically, residues 25–308 are extracellular; that stretch reads GSHSMRYFYT…EPSSQPTIPI (284 aa). N-linked (GlcNAc...) asparagine glycosylation occurs at Asn-110. Residues 115–206 are alpha-2; sequence GSHTIQIMYG…ENGKETLQRT (92 aa). 2 disulfides stabilise this stretch: Cys-125-Cys-188 and Cys-227-Cys-283. The segment at 207 to 298 is alpha-3; sequence DPPKTHMTHH…GLPKPLTLRW (92 aa). Residues 209 to 295 form the Ig-like C1-type domain; that stretch reads PKTHMTHHPI…QHEGLPKPLT (87 aa). The tract at residues 299–308 is connecting peptide; it reads EPSSQPTIPI. The chain crosses the membrane as a helical span at residues 309-332; the sequence is VGIIAGLVLLGAVITGAVVAAVMW. Over 333–365 the chain is Cytoplasmic; the sequence is RRKSSDRKGGSYTQAASSDSAQGSDVSLTACKV. The tract at residues 339 to 360 is disordered; that stretch reads RKGGSYTQAASSDSAQGSDVSL. Ser-343 carries the phosphoserine modification. Position 344 is a phosphotyrosine (Tyr-344). Positions 346–359 are enriched in low complexity; sequence QAASSDSAQGSDVS. A phosphoserine mark is found at Ser-349, Ser-350, Ser-352, Ser-356, and Ser-359.

This sequence belongs to the MHC class I family. In terms of assembly, heterodimer of an alpha chain and a beta chain (beta-2-microglobulin).

It is found in the membrane. Involved in the presentation of foreign antigens to the immune system. The polypeptide is Patr class I histocompatibility antigen, A-108 alpha chain (Patr-A) (Pan troglodytes (Chimpanzee)).